The chain runs to 495 residues: Pleckstrin homology domain-containing family O member 2 (495 aa).

The PH domain maps to 18-120 (TADKAGWIKK…WIKALNEGIN (103 aa)). Phosphoserine occurs at positions 165 and 168. The disordered stretch occupies residues 171–411 (LSRLDLDVPD…ESPQHPRLPK (241 aa)). The segment covering 198–213 (QEPPRALMPPVKPSPG) has biased composition (pro residues). Threonine 233 carries the phosphothreonine modification. A compositionally biased stretch (polar residues) spans 235 to 244 (DSASSGANPE). Phosphoserine is present on residues serine 236, serine 238, serine 239, serine 274, and serine 292. Threonine 296 is subject to Phosphothreonine. Positions 324 to 335 (SGVDASGSSQSS) are enriched in low complexity. Polar residues predominate over residues 336-350 (EAPETTSPEPTQVSV). Serine 395 bears the Phosphoserine mark. Residues 399 to 411 (LLRESPQHPRLPK) show a composition bias toward basic and acidic residues. The stretch at 444 to 469 (CAESLLSQAVEQLRQATQVLQEMRDL) forms a coiled coil.

In Mus musculus (Mouse), this protein is Pleckstrin homology domain-containing family O member 2 (Plekho2).